The following is a 94-amino-acid chain: Cyclin-dependent kinases regulatory subunit (94 aa).

Belongs to the CKS family. Forms a homohexamer that can probably bind six kinase subunits. Interacts with cdk-1.

It localises to the nucleus. Its function is as follows. Binds to the catalytic subunit of the cyclin dependent kinases and is essential for their biological function. Has a role in the exit from M phase during early mitotic cell division. More specifically, thought to act by the degrading B-type cyclins that causes breakdown of nuclear envelope and exit mitosis. The protein is Cyclin-dependent kinases regulatory subunit of Caenorhabditis briggsae.